A 264-amino-acid polypeptide reads, in one-letter code: Proliferating cell nuclear antigen 2 (264 aa).

It belongs to the PCNA family. In terms of assembly, homotrimer. Oligomer. Interacts with ORC1 (via PIP-box motif). Interacts with FEN1.

It localises to the nucleus. It is found in the chromosome. The protein localises to the cytoplasm. May be involved in DNA damage response. Appears not to be involved in DNA replication in trophozoites. This chain is Proliferating cell nuclear antigen 2, found in Plasmodium falciparum (isolate 3D7).